The following is a 624-amino-acid chain: Alpha-galactosidase 3 (624 aa).

Residues 1–22 (MSPSAAVLIPLAAAVLLRPVVG) form the signal peptide. Asparagine 37, asparagine 56, asparagine 197, asparagine 259, and asparagine 293 each carry an N-linked (GlcNAc...) asparagine glycan. The Nucleophile role is filled by aspartate 347. Asparagine 393 is a glycosylation site (N-linked (GlcNAc...) asparagine). Aspartate 412 functions as the Proton donor in the catalytic mechanism. N-linked (GlcNAc...) asparagine glycosylation occurs at asparagine 469.

Belongs to the glycosyl hydrolase 27 family.

The protein resides in the secreted. The enzyme catalyses Hydrolysis of terminal, non-reducing alpha-D-galactose residues in alpha-D-galactosides, including galactose oligosaccharides, galactomannans and galactolipids.. Alpha-galactosidase involved in the degradation of simple oligosaccharides like melibiose, raffinose and stachyose, and of polymeric galacto(gluco)mannans. The protein is Alpha-galactosidase 3 (agl3) of Hypocrea jecorina (Trichoderma reesei).